The chain runs to 660 residues: Potassium voltage-gated channel subfamily KQT member 1 (660 aa).

Polar residues predominate over residues 1–18 (MSSEVKSRWSGSGSQKSG). Positions 1–67 (MSSEVKSRWS…PESRAADSRA (67 aa)) are disordered. Residues 1 to 113 (MSSEVKSRWS…YNFLERPTGW (113 aa)) lie on the Cytoplasmic side of the membrane. Positions 53–67 (STDKNPESRAADSRA) are enriched in basic and acidic residues. A helical transmembrane segment spans residues 114-135 (KCFIYHFTVFLIVLVCLIFSVM). The Extracellular portion of the chain corresponds to 136-146 (STIEQYHYFAN). The chain crosses the membrane as a helical span at residues 147–169 (RALVWMEIVLVVFFGTEYIVRLW). Residues 170–185 (SAGCRSKYVGFWGRLR) lie on the Cytoplasmic side of the membrane. Residues 186-211 (FARKPISIIDLIVVVASVIVLCVGSN) traverse the membrane as a helical segment. At 212-219 (GQVFATSA) the chain is on the extracellular side. A helical; Voltage-sensor transmembrane segment spans residues 220 to 235 (IRGIRFLQILRMLHVD). Over 236-253 (RQGGTWRLLGSVVFIHRQ) the chain is Cytoplasmic. Residue Gln237 participates in a 1,2-diacyl-sn-glycero-3-phospho-(1D-myo-inositol-4,5-bisphosphate) binding. A helical transmembrane segment spans residues 254-276 (ELITTLYIGFLGLIFSSYFVYLA). The Extracellular segment spans residues 277–292 (EKDAVDDSGSQQFGSY). The segment at residues 293–313 (ADALWWGVVTVTTIGYGDKVP) is an intramembrane region (pore-forming). Residues 314-315 (QT) are Extracellular-facing. A helical transmembrane segment spans residues 316–341 (WIGRTIASCFSVFAISFFALPAGILG). At 342 to 660 (SGFALKVQQK…RKDQDNQPDL (319 aa)) the chain is on the cytoplasmic side. A disordered region spans residues 399 to 426 (SPSPKTKKSVGKRKKLKTDKDNGLNSEK). Over residues 403-415 (KTKKSVGKRKKLK) the composition is skewed to basic residues. Positions 579–615 (KNTIGARLNRVEEKFVHMDQKLNTITDMLHHLVAHQQ) form a coiled coil.

Belongs to the potassium channel family. KQT (TC 1.A.1.15) subfamily. Kv7.1/KCNQ1 sub-subfamily. As to quaternary structure, tetramer. Heterotetramer with KCNE1; targets to the membrane raft. Interacts (via C-terminus) with CALM; forms a heterotetramer in a calcium-independent manner. Interacts with KCNE2; form a heterooligomer complex that targets to the membrane raft and leading to currents with an apparently instantaneous activation, a rapid deactivation process and a linear current-voltage relationship and decreases the amplitude of the outward current. Interacts with KCNE3; four KCNE3 molecules are bound to one KCNQ1 tetramer (4:4 KCNQ1:KCNE3 stoichiometry); alters membrane raft localization; affects KCNQ1 structure and gating properties. Interacts with KCNE4; impairs KCNQ1 localization in lipid rafts and inhibits voltage-gated potassium channel activity. Interacts with KCNE5; impairs KCNQ1 localization in lipid rafts and only conducts current upon strong and continued depolarization. As to expression, expressed only in rectal gland and heart. Faintly expressed in intestine. Undetectable in kidney, brain, testis, liver and gills.

The protein resides in the cell membrane. It is found in the cytoplasmic vesicle membrane. Its subcellular location is the membrane raft. The protein localises to the endoplasmic reticulum. It localises to the basolateral cell membrane. It catalyses the reaction K(+)(in) = K(+)(out). Its activity is regulated as follows. PIP2 molecule is essential to activate KCNQ channels by inducing the coupling of the voltage-sensing domain (VSD) and the pore-forming domain (PD). Upon channel activation, PIP2 disrupts the VSD-calmodulin/CALM interactions, causing the release of CALM from the VSD which triggers the opening of the gate. Calcium potentiates KCNQ1 channel current through calcium-bound CALM. Calcium-bound CALM competes with PIP2 to stabilize the channel open state. Functionally, pore-forming subunit of the voltage-gated potassium (Kv) channel involved in the regulation of cardiomyocyte excitability and important in normal development and functions of myocardium, inner ear, stomach and colon. Associates with KCNE beta subunits that modulates current kinetics. Induces a voltage-dependent by rapidly activating and slowly deactivating potassium-selective outward current. Also promotes a delayed voltage activated potassium current showing outward rectification characteristic. During beta-adrenergic receptor stimulation participates in cardiac repolarization by associating with KCNE1 to form the I(Ks) cardiac potassium current that increases the amplitude and slows down the activation kinetics of outward potassium current I(Ks). When associated with KCNE3, forms the potassium channel that is important for cyclic AMP-stimulated intestinal secretion of chloride ions. When associated with KCNE2, forms a heterooligomer complex leading to currents with an apparently instantaneous activation, a rapid deactivation process and a linear current-voltage relationship and decreases the amplitude of the outward current. When associated with KCNE4, inhibits voltage-gated potassium channel activity. When associated with KCNE5, this complex only conducts current upon strong and continued depolarization. The chain is Potassium voltage-gated channel subfamily KQT member 1 from Squalus acanthias (Spiny dogfish).